Reading from the N-terminus, the 85-residue chain is Large ribosomal subunit protein bL27 (85 aa).

Positions 1–22 are disordered; the sequence is MAHKKAGGSTRNGRDSESKRLG.

The protein belongs to the bacterial ribosomal protein bL27 family.

This chain is Large ribosomal subunit protein bL27, found in Aliivibrio fischeri (strain ATCC 700601 / ES114) (Vibrio fischeri).